Reading from the N-terminus, the 181-residue chain is NAD(P)H-quinone oxidoreductase subunit I, chloroplastic (181 aa).

4Fe-4S ferredoxin-type domains are found at residues 55–84 (GRIH…VDWE) and 95–124 (KNYS…MTEE). Cysteine 64, cysteine 67, cysteine 70, cysteine 74, cysteine 104, cysteine 107, cysteine 110, and cysteine 114 together coordinate [4Fe-4S] cluster.

It belongs to the complex I 23 kDa subunit family. In terms of assembly, NDH is composed of at least 16 different subunits, 5 of which are encoded in the nucleus. It depends on [4Fe-4S] cluster as a cofactor.

The protein resides in the plastid. Its subcellular location is the chloroplast thylakoid membrane. The enzyme catalyses a plastoquinone + NADH + (n+1) H(+)(in) = a plastoquinol + NAD(+) + n H(+)(out). It carries out the reaction a plastoquinone + NADPH + (n+1) H(+)(in) = a plastoquinol + NADP(+) + n H(+)(out). Functionally, NDH shuttles electrons from NAD(P)H:plastoquinone, via FMN and iron-sulfur (Fe-S) centers, to quinones in the photosynthetic chain and possibly in a chloroplast respiratory chain. The immediate electron acceptor for the enzyme in this species is believed to be plastoquinone. Couples the redox reaction to proton translocation, and thus conserves the redox energy in a proton gradient. The sequence is that of NAD(P)H-quinone oxidoreductase subunit I, chloroplastic from Angiopteris evecta (Mule's foot fern).